Reading from the N-terminus, the 339-residue chain is Dihydroorotate dehydrogenase (quinone) (339 aa).

Residues Ala62–Lys66 and Thr86 contribute to the FMN site. Lys66 provides a ligand contact to substrate. Asn111 to Phe115 lines the substrate pocket. Residues Asn139 and Asn172 each contribute to the FMN site. Residue Asn172 coordinates substrate. Catalysis depends on Ser175, which acts as the Nucleophile. Position 177 (Asn177) interacts with substrate. FMN contacts are provided by Lys217 and Thr245. Residue Asn246 to Thr247 participates in substrate binding. Residues Gly268, Gly297, and Tyr318–Ser319 each bind FMN.

Belongs to the dihydroorotate dehydrogenase family. Type 2 subfamily. Monomer. The cofactor is FMN.

The protein localises to the cell membrane. It carries out the reaction (S)-dihydroorotate + a quinone = orotate + a quinol. Its pathway is pyrimidine metabolism; UMP biosynthesis via de novo pathway; orotate from (S)-dihydroorotate (quinone route): step 1/1. Catalyzes the conversion of dihydroorotate to orotate with quinone as electron acceptor. This is Dihydroorotate dehydrogenase (quinone) from Shewanella denitrificans (strain OS217 / ATCC BAA-1090 / DSM 15013).